Here is a 338-residue protein sequence, read N- to C-terminus: Glycerol-3-phosphate dehydrogenase [NAD(P)+] (338 aa).

Residues tryptophan 12, histidine 33, and lysine 110 each contribute to the NADPH site. Sn-glycerol 3-phosphate contacts are provided by lysine 110, glycine 142, and serine 144. Alanine 146 is a binding site for NADPH. 5 residues coordinate sn-glycerol 3-phosphate: lysine 197, aspartate 250, serine 260, arginine 261, and asparagine 262. The Proton acceptor role is filled by lysine 197. Arginine 261 serves as a coordination point for NADPH. Valine 286 and glutamate 288 together coordinate NADPH.

It belongs to the NAD-dependent glycerol-3-phosphate dehydrogenase family.

The protein localises to the cytoplasm. The enzyme catalyses sn-glycerol 3-phosphate + NAD(+) = dihydroxyacetone phosphate + NADH + H(+). It carries out the reaction sn-glycerol 3-phosphate + NADP(+) = dihydroxyacetone phosphate + NADPH + H(+). It participates in membrane lipid metabolism; glycerophospholipid metabolism. Functionally, catalyzes the reduction of the glycolytic intermediate dihydroxyacetone phosphate (DHAP) to sn-glycerol 3-phosphate (G3P), the key precursor for phospholipid synthesis. This Acidobacterium capsulatum (strain ATCC 51196 / DSM 11244 / BCRC 80197 / JCM 7670 / NBRC 15755 / NCIMB 13165 / 161) protein is Glycerol-3-phosphate dehydrogenase [NAD(P)+].